The chain runs to 221 residues: Iron-sulfur cluster repair protein YtfE (221 aa).

Belongs to the RIC family. YtfE subfamily. As to quaternary structure, homodimer.

The protein resides in the cytoplasm. Functionally, di-iron-containing protein involved in the repair of iron-sulfur clusters damaged by oxidative and nitrosative stress conditions. The polypeptide is Iron-sulfur cluster repair protein YtfE (Yersinia pseudotuberculosis serotype O:1b (strain IP 31758)).